A 173-amino-acid chain; its full sequence is Methylated-DNA--protein-cysteine methyltransferase (173 aa).

The Nucleophile; methyl group acceptor role is filled by Cys-143.

This sequence belongs to the MGMT family.

The protein resides in the cytoplasm. The catalysed reaction is a 6-O-methyl-2'-deoxyguanosine in DNA + L-cysteinyl-[protein] = S-methyl-L-cysteinyl-[protein] + a 2'-deoxyguanosine in DNA. The enzyme catalyses a 4-O-methyl-thymidine in DNA + L-cysteinyl-[protein] = a thymidine in DNA + S-methyl-L-cysteinyl-[protein]. Its function is as follows. Involved in the cellular defense against the biological effects of O6-methylguanine (O6-MeG) and O4-methylthymine (O4-MeT) in DNA. Repairs the methylated nucleobase in DNA by stoichiometrically transferring the methyl group to a cysteine residue in the enzyme. This is a suicide reaction: the enzyme is irreversibly inactivated. The polypeptide is Methylated-DNA--protein-cysteine methyltransferase (Pyrococcus sp. (strain NA2)).